The primary structure comprises 84 residues: Acyl carrier protein (84 aa).

One can recognise a Carrier domain in the interval 4 to 79 (NEIFEKVQDI…EVVDFIKSKL (76 aa)). Ser-39 bears the O-(pantetheine 4'-phosphoryl)serine mark.

The protein belongs to the acyl carrier protein (ACP) family. 4'-phosphopantetheine is transferred from CoA to a specific serine of apo-ACP by AcpS. This modification is essential for activity because fatty acids are bound in thioester linkage to the sulfhydryl of the prosthetic group.

The protein localises to the plastid. The protein resides in the chloroplast. It functions in the pathway lipid metabolism; fatty acid biosynthesis. Functionally, carrier of the growing fatty acid chain in fatty acid biosynthesis. This Porphyra purpurea (Red seaweed) protein is Acyl carrier protein.